We begin with the raw amino-acid sequence, 211 residues long: 2,3-bisphosphoglycerate-dependent phosphoglycerate mutase (211 aa).

Residues 9–16 (RHGQSDWN), 22–23 (TG), Arg61, 88–91 (ERDY), Lys99, 115–116 (RR), and 159–160 (GN) contribute to the substrate site. His10 serves as the catalytic Tele-phosphohistidine intermediate. The active-site Proton donor/acceptor is the Glu88.

The protein belongs to the phosphoglycerate mutase family. BPG-dependent PGAM subfamily. Homodimer.

It carries out the reaction (2R)-2-phosphoglycerate = (2R)-3-phosphoglycerate. It participates in carbohydrate degradation; glycolysis; pyruvate from D-glyceraldehyde 3-phosphate: step 3/5. Functionally, catalyzes the interconversion of 2-phosphoglycerate and 3-phosphoglycerate. This is 2,3-bisphosphoglycerate-dependent phosphoglycerate mutase from Rhizobium meliloti (strain 1021) (Ensifer meliloti).